A 291-amino-acid polypeptide reads, in one-letter code: tRNA N(3)-cytidine methyltransferase METTL8, mitochondrial (291 aa).

A mitochondrion-targeting transit peptide spans 1 to 21 (MNMIWRNSISCLRLGKVPHRY). Residue Lys-80 forms a Glycyl lysine isopeptide (Lys-Gly) (interchain with G-Cter in SUMO) linkage. Residues Trp-89 and Tyr-93 each coordinate S-adenosyl-L-methionine. Positions 141–187 (FSRMHCPTVPDEKNHYEKSSGSSEGQSKTESDFSNLDSEKHKKGPME) are disordered. A compositionally biased stretch (low complexity) spans 159 to 168 (SSGSSEGQSK). The S-adenosyl-L-methionine site is built by Gly-204, Asp-230, and Asp-256.

The protein belongs to the methyltransferase superfamily. METL family. As to quaternary structure, interacts with EP300.

The protein localises to the mitochondrion. The catalysed reaction is cytidine(32) in tRNA(Ser) + S-adenosyl-L-methionine = N(3)-methylcytidine(32) in tRNA(Ser) + S-adenosyl-L-homocysteine + H(+). It carries out the reaction cytidine(32) in tRNA(Thr) + S-adenosyl-L-methionine = N(3)-methylcytidine(32) in tRNA(Thr) + S-adenosyl-L-homocysteine + H(+). The enzyme catalyses a cytidine in mRNA + S-adenosyl-L-methionine = an N(3)-methylcytidine in mRNA + S-adenosyl-L-homocysteine + H(+). Its function is as follows. Mitochondrial S-adenosyl-L-methionine-dependent methyltransferase that mediates N(3)-methylcytidine modification of residue 32 of the tRNA anticodon loop of mitochondrial tRNA(Ser)(UCN) and tRNA(Thr). N(3)-methylcytidine methylation modification regulates mitochondrial translation efficiency and is required for activity of the respiratory chain. N(3)-methylcytidine methylation of mitochondrial tRNA(Ser)(UCN) requires the formation of N(6)-dimethylallyladenosine(37) (i6A37) by TRIT1 as prerequisite. May also mediate N(3)-methylcytidine modification of mRNAs. The existence of N(3)-methylcytidine modification on mRNAs is however unclear, and additional evidences are required to confirm the role of the N(3)-methylcytidine-specific mRNA methyltransferase activity of METTL8 in vivo. This chain is tRNA N(3)-cytidine methyltransferase METTL8, mitochondrial, found in Homo sapiens (Human).